A 296-amino-acid polypeptide reads, in one-letter code: Light-independent protochlorophyllide reductase iron-sulfur ATP-binding protein (296 aa).

Residues glycine 10–threonine 15 and lysine 39 each bind ATP. A Mg(2+)-binding site is contributed by serine 14. 2 residues coordinate [4Fe-4S] cluster: cysteine 95 and cysteine 129. Residue asparagine 180 to arginine 181 coordinates ATP.

This sequence belongs to the NifH/BchL/ChlL family. Homodimer. Protochlorophyllide reductase is composed of three subunits; ChlL, ChlN and ChlB. The cofactor is [4Fe-4S] cluster.

It is found in the plastid. Its subcellular location is the chloroplast. The catalysed reaction is chlorophyllide a + oxidized 2[4Fe-4S]-[ferredoxin] + 2 ADP + 2 phosphate = protochlorophyllide a + reduced 2[4Fe-4S]-[ferredoxin] + 2 ATP + 2 H2O. Its pathway is porphyrin-containing compound metabolism; chlorophyll biosynthesis (light-independent). Functionally, component of the dark-operative protochlorophyllide reductase (DPOR) that uses Mg-ATP and reduced ferredoxin to reduce ring D of protochlorophyllide (Pchlide) to form chlorophyllide a (Chlide). This reaction is light-independent. The L component serves as a unique electron donor to the NB-component of the complex, and binds Mg-ATP. The protein is Light-independent protochlorophyllide reductase iron-sulfur ATP-binding protein of Chlorokybus atmophyticus (Soil alga).